The following is a 360-amino-acid chain: uncharacterized protein (360 aa).

The 161-residue stretch at 19–179 folds into the PNPLA domain; the sequence is LALGSGGARG…LDPLPMAPIA (161 aa). The short motif at 50-54 is the GXSXG element; it reads GSSMG. Ser-52 (nucleophile) is an active-site residue. The active-site Proton acceptor is the Asp-166. A DGA/G motif is present at residues 166–168; it reads DGG. Residues 251 to 282 are disordered; the sequence is DSWSQAPEIEQRPAGPPADREEAADTPGLPKM.

This sequence belongs to the NTE family.

This is an uncharacterized protein from Mycobacterium bovis (strain ATCC BAA-935 / AF2122/97).